The following is a 697-amino-acid chain: Elongation factor G (697 aa).

The 280-residue stretch at 8-287 folds into the tr-type G domain; sequence ERVRNIGIAA…AVVDYLPAPT (280 aa). GTP is bound by residues 17-24, 81-85, and 135-138; these read AHIDAGKT, DTPGH, and NKMD.

It belongs to the TRAFAC class translation factor GTPase superfamily. Classic translation factor GTPase family. EF-G/EF-2 subfamily.

It localises to the cytoplasm. Its function is as follows. Catalyzes the GTP-dependent ribosomal translocation step during translation elongation. During this step, the ribosome changes from the pre-translocational (PRE) to the post-translocational (POST) state as the newly formed A-site-bound peptidyl-tRNA and P-site-bound deacylated tRNA move to the P and E sites, respectively. Catalyzes the coordinated movement of the two tRNA molecules, the mRNA and conformational changes in the ribosome. This Arthrospira platensis (Spirulina platensis) protein is Elongation factor G (fusA).